We begin with the raw amino-acid sequence, 353 residues long: Photosystem II protein D1 (353 aa).

N-acetylthreonine is present on T2. Position 2 is a phosphothreonine (T2). A run of 3 helical transmembrane segments spans residues 29 to 46 (YIGW…TATS), 118 to 133 (HFLL…EWEL), and 142 to 156 (WIAV…AATA). Residue H118 participates in chlorophyll a binding. Y126 is a pheophytin a binding site. Residues D170 and E189 each coordinate [CaMn4O5] cluster. Residues 197-218 (FHMLGVAGVFGGSLFSAMHGSL) form a helical membrane-spanning segment. H198 is a binding site for chlorophyll a. A quinone-binding positions include H215 and 264–265 (SF). Residue H215 participates in Fe cation binding. A Fe cation-binding site is contributed by H272. The helical transmembrane segment at 274-288 (FLAAWPVVGIWFTAL) threads the bilayer. 4 residues coordinate [CaMn4O5] cluster: H332, E333, D342, and A344. Residues 345–353 (AVEVPSTNG) constitute a propeptide that is removed on maturation.

This sequence belongs to the reaction center PufL/M/PsbA/D family. PSII is composed of 1 copy each of membrane proteins PsbA, PsbB, PsbC, PsbD, PsbE, PsbF, PsbH, PsbI, PsbJ, PsbK, PsbL, PsbM, PsbT, PsbX, PsbY, PsbZ, Psb30/Ycf12, at least 3 peripheral proteins of the oxygen-evolving complex and a large number of cofactors. It forms dimeric complexes. The D1/D2 heterodimer binds P680, chlorophylls that are the primary electron donor of PSII, and subsequent electron acceptors. It shares a non-heme iron and each subunit binds pheophytin, quinone, additional chlorophylls, carotenoids and lipids. D1 provides most of the ligands for the Mn4-Ca-O5 cluster of the oxygen-evolving complex (OEC). There is also a Cl(-1) ion associated with D1 and D2, which is required for oxygen evolution. The PSII complex binds additional chlorophylls, carotenoids and specific lipids. is required as a cofactor. Post-translationally, tyr-161 forms a radical intermediate that is referred to as redox-active TyrZ, YZ or Y-Z. In terms of processing, C-terminally processed by CTPA; processing is essential to allow assembly of the oxygen-evolving complex and thus photosynthetic growth.

The protein localises to the plastid. It localises to the chloroplast thylakoid membrane. The catalysed reaction is 2 a plastoquinone + 4 hnu + 2 H2O = 2 a plastoquinol + O2. Functionally, photosystem II (PSII) is a light-driven water:plastoquinone oxidoreductase that uses light energy to abstract electrons from H(2)O, generating O(2) and a proton gradient subsequently used for ATP formation. It consists of a core antenna complex that captures photons, and an electron transfer chain that converts photonic excitation into a charge separation. The D1/D2 (PsbA/PsbD) reaction center heterodimer binds P680, the primary electron donor of PSII as well as several subsequent electron acceptors. The chain is Photosystem II protein D1 from Calycanthus floridus var. glaucus (Eastern sweetshrub).